The primary structure comprises 495 residues: Lanosterol 14-alpha demethylase erg11 (495 aa).

The chain crosses the membrane as a helical span at residues 2-22 (AFSLVSILLSIALAWYVGYII). Position 442 (Cys442) interacts with heme.

The protein belongs to the cytochrome P450 family. As to quaternary structure, interacts with dap1. Requires heme as cofactor.

Its subcellular location is the endoplasmic reticulum. The protein resides in the membrane. The enzyme catalyses a 14alpha-methyl steroid + 3 reduced [NADPH--hemoprotein reductase] + 3 O2 = a Delta(14) steroid + formate + 3 oxidized [NADPH--hemoprotein reductase] + 4 H2O + 4 H(+). The catalysed reaction is a 14alpha-methyl steroid + reduced [NADPH--hemoprotein reductase] + O2 = a 14alpha-hydroxymethyl steroid + oxidized [NADPH--hemoprotein reductase] + H2O + H(+). It carries out the reaction a 14alpha-hydroxymethyl steroid + reduced [NADPH--hemoprotein reductase] + O2 = a 14alpha-formyl steroid + oxidized [NADPH--hemoprotein reductase] + 2 H2O + H(+). It catalyses the reaction a 14alpha-formyl steroid + reduced [NADPH--hemoprotein reductase] + O2 = a Delta(14) steroid + formate + oxidized [NADPH--hemoprotein reductase] + H2O + 2 H(+). The enzyme catalyses lanosterol + 3 reduced [NADPH--hemoprotein reductase] + 3 O2 = 4,4-dimethyl-5alpha-cholesta-8,14,24-trien-3beta-ol + formate + 3 oxidized [NADPH--hemoprotein reductase] + 4 H2O + 4 H(+). The catalysed reaction is lanosterol + reduced [NADPH--hemoprotein reductase] + O2 = 32-hydroxylanosterol + oxidized [NADPH--hemoprotein reductase] + H2O + H(+). It carries out the reaction 32-hydroxylanosterol + reduced [NADPH--hemoprotein reductase] + O2 = 32-oxolanosterol + oxidized [NADPH--hemoprotein reductase] + 2 H2O + H(+). It catalyses the reaction 32-oxolanosterol + reduced [NADPH--hemoprotein reductase] + O2 = 4,4-dimethyl-5alpha-cholesta-8,14,24-trien-3beta-ol + formate + oxidized [NADPH--hemoprotein reductase] + H2O + 2 H(+). The enzyme catalyses eburicol + 3 reduced [NADPH--hemoprotein reductase] + 3 O2 = 14-demethyleburicol + formate + 3 oxidized [NADPH--hemoprotein reductase] + 4 H2O + 4 H(+). The catalysed reaction is eburicol + reduced [NADPH--hemoprotein reductase] + O2 = 32-hydroxyeburicol + oxidized [NADPH--hemoprotein reductase] + H2O + H(+). It carries out the reaction 32-hydroxyeburicol + reduced [NADPH--hemoprotein reductase] + O2 = 32-oxoeburicol + oxidized [NADPH--hemoprotein reductase] + 2 H2O + H(+). It catalyses the reaction 32-oxoeburicol + reduced [NADPH--hemoprotein reductase] + O2 = 14-demethyleburicol + formate + oxidized [NADPH--hemoprotein reductase] + H2O + 2 H(+). It participates in steroid biosynthesis; zymosterol biosynthesis; zymosterol from lanosterol: step 1/6. The protein operates within steroid metabolism; ergosterol biosynthesis. Functionally, sterol 14alpha-demethylase that plays a critical role in the third module of ergosterol biosynthesis pathway, being ergosterol the major sterol component in fungal membranes that participates in a variety of functions. The third module or late pathway involves the ergosterol synthesis itself through consecutive reactions that mainly occur in the endoplasmic reticulum (ER) membrane. In filamentous fungi, during the initial step of this module, lanosterol (lanosta-8,24-dien-3beta-ol) can be metabolized to eburicol. Sterol 14alpha-demethylase catalyzes the three-step oxidative removal of the 14alpha-methyl group (C-32) of both these sterols in the form of formate, and converts eburicol and lanosterol to 14-demethyleburicol (4,4,24-trimethylergosta-8,14,24(28)-trienol) and 4,4-dimethyl-5alpha-cholesta-8,14,24-trien-3beta-ol, respectively, which are further metabolized by other enzymes in the pathway to ergosterol. Can also use substrates not intrinsic to fungi, such as 24,25-dihydrolanosterol (DHL), producing 4,4-dimethyl-8,14-cholestadien-3-beta-ol, but at lower rates than the endogenous substrates. In Schizosaccharomyces pombe (strain 972 / ATCC 24843) (Fission yeast), this protein is Lanosterol 14-alpha demethylase erg11.